The sequence spans 464 residues: Argininosuccinate lyase (464 aa).

This sequence belongs to the lyase 1 family. Argininosuccinate lyase subfamily.

It is found in the cytoplasm. It catalyses the reaction 2-(N(omega)-L-arginino)succinate = fumarate + L-arginine. It participates in amino-acid biosynthesis; L-arginine biosynthesis; L-arginine from L-ornithine and carbamoyl phosphate: step 3/3. In Crocosphaera subtropica (strain ATCC 51142 / BH68) (Cyanothece sp. (strain ATCC 51142)), this protein is Argininosuccinate lyase.